A 633-amino-acid polypeptide reads, in one-letter code: Telomere-binding protein 1 (633 aa).

The segment at 253–272 (HAADRDDDENSSGCVHPSTS) is disordered. Polar residues predominate over residues 263-272 (SSGCVHPSTS). The 80-residue stretch at 351-430 (VKLTIKSFNI…LNDIGFTLEC (80 aa)) folds into the Ubiquitin-like domain. A sufficient for telomeric DNA binding region spans residues 506 to 615 (PFADPNSLAL…RVLAAQAYWS (110 aa)). The HTH myb-type domain occupies 529-588 (GQRRIRRPFTVAEVELLVEAVEHLGTGRWRDVKFRAFENVHHRTYVDLKDKWKTLVHTAS). Residues 534–584 (RRPFTVAEVELLVEAVEHLGTGRWRDVKFRAFENVHHRTYVDLKDKWKTLV) form the SANT domain. Positions 557 to 584 (WRDVKFRAFENVHHRTYVDLKDKWKTLV) form a DNA-binding region, H-T-H motif.

Homodimer. Ubiquitous.

It is found in the chromosome. The protein localises to the telomere. In terms of biological role, binds the telomeric double-stranded 5'TTTAGGG-3' repeat and regulates telomere length and structure. In Oryza sativa subsp. japonica (Rice), this protein is Telomere-binding protein 1 (TBP1).